A 361-amino-acid chain; its full sequence is tRNA-specific 2-thiouridylase MnmA (361 aa).

Residues 11–18 (GMSGGVDS) and Met37 each bind ATP. Cys106 serves as the catalytic Nucleophile. A disulfide bridge connects residues Cys106 and Cys202. An ATP-binding site is contributed by Gly130. The segment at 152-154 (KDQ) is interaction with tRNA. Cys202 (cysteine persulfide intermediate) is an active-site residue. The segment at 308–309 (RY) is interaction with tRNA.

The protein belongs to the MnmA/TRMU family.

It is found in the cytoplasm. It carries out the reaction S-sulfanyl-L-cysteinyl-[protein] + uridine(34) in tRNA + AH2 + ATP = 2-thiouridine(34) in tRNA + L-cysteinyl-[protein] + A + AMP + diphosphate + H(+). In terms of biological role, catalyzes the 2-thiolation of uridine at the wobble position (U34) of tRNA, leading to the formation of s(2)U34. This is tRNA-specific 2-thiouridylase MnmA from Clostridium botulinum (strain Eklund 17B / Type B).